The primary structure comprises 105 residues: Large ribosomal subunit protein eL36 (105 aa).

Residues 1–36 are disordered; sequence MAQERSGIAVGLNKGHKTTPLNTPKTRISRSKGKAS. A compositionally biased stretch (basic residues) spans 27–36; sequence RISRSKGKAS.

Belongs to the eukaryotic ribosomal protein eL36 family. As to quaternary structure, component of the large ribosomal subunit (LSU).

It is found in the cytoplasm. Component of the ribosome, a large ribonucleoprotein complex responsible for the synthesis of proteins in the cell. The small ribosomal subunit (SSU) binds messenger RNAs (mRNAs) and translates the encoded message by selecting cognate aminoacyl-transfer RNA (tRNA) molecules. The large subunit (LSU) contains the ribosomal catalytic site termed the peptidyl transferase center (PTC), which catalyzes the formation of peptide bonds, thereby polymerizing the amino acids delivered by tRNAs into a polypeptide chain. The nascent polypeptides leave the ribosome through a tunnel in the LSU and interact with protein factors that function in enzymatic processing, targeting, and the membrane insertion of nascent chains at the exit of the ribosomal tunnel. This Emericella nidulans (strain FGSC A4 / ATCC 38163 / CBS 112.46 / NRRL 194 / M139) (Aspergillus nidulans) protein is Large ribosomal subunit protein eL36.